The primary structure comprises 490 residues: Aspartyl/glutamyl-tRNA(Asn/Gln) amidotransferase subunit B (490 aa).

This sequence belongs to the GatB/GatE family. GatB subfamily. In terms of assembly, heterotrimer of A, B and C subunits.

The enzyme catalyses L-glutamyl-tRNA(Gln) + L-glutamine + ATP + H2O = L-glutaminyl-tRNA(Gln) + L-glutamate + ADP + phosphate + H(+). The catalysed reaction is L-aspartyl-tRNA(Asn) + L-glutamine + ATP + H2O = L-asparaginyl-tRNA(Asn) + L-glutamate + ADP + phosphate + 2 H(+). Functionally, allows the formation of correctly charged Asn-tRNA(Asn) or Gln-tRNA(Gln) through the transamidation of misacylated Asp-tRNA(Asn) or Glu-tRNA(Gln) in organisms which lack either or both of asparaginyl-tRNA or glutaminyl-tRNA synthetases. The reaction takes place in the presence of glutamine and ATP through an activated phospho-Asp-tRNA(Asn) or phospho-Glu-tRNA(Gln). This Symbiobacterium thermophilum (strain DSM 24528 / JCM 14929 / IAM 14863 / T) protein is Aspartyl/glutamyl-tRNA(Asn/Gln) amidotransferase subunit B.